The primary structure comprises 36 residues: Kappa-theraphotoxin-Pg1a (36 aa).

Intrachain disulfides connect C4–C19, C11–C24, and C18–C31.

Belongs to the neurotoxin 10 (Hwtx-1) family. 44 (Jztx-4) subfamily. As to expression, expressed by the venom gland.

The protein resides in the secreted. Functionally, gating modifier of Kv2.1/KCNB1 (IC(50)=5.1 nM), Kv2.2/KCNB2 and Kv4.3/KCND3 channels (IC(50)=39 nM). Acts by shifting the channel activation to more depolarized potentials by stabilizing the resting conformation of the voltage sensor. It completely inhibits opening of the Kv2.1/KCNB1 channel at negative membrane voltages and dramatically shifts channel activation to positive voltages. May act by partitioning into lipid membranes and then by binding the voltage sensor paddle of the channel from a place within the membrane. This chain is Kappa-theraphotoxin-Pg1a, found in Chilobrachys guangxiensis (Chinese earth tiger tarantula).